Reading from the N-terminus, the 158-residue chain is Small ribosomal subunit protein uS7 (158 aa).

This sequence belongs to the universal ribosomal protein uS7 family. In terms of assembly, part of the 30S ribosomal subunit. Contacts proteins S9 and S11.

In terms of biological role, one of the primary rRNA binding proteins, it binds directly to 16S rRNA where it nucleates assembly of the head domain of the 30S subunit. Is located at the subunit interface close to the decoding center, probably blocks exit of the E-site tRNA. The sequence is that of Small ribosomal subunit protein uS7 from Christiangramia forsetii (strain DSM 17595 / CGMCC 1.15422 / KT0803) (Gramella forsetii).